The sequence spans 139 residues: Ribosome-binding factor A (139 aa).

This sequence belongs to the RbfA family. As to quaternary structure, monomer. Binds 30S ribosomal subunits, but not 50S ribosomal subunits or 70S ribosomes.

Its subcellular location is the cytoplasm. Functionally, one of several proteins that assist in the late maturation steps of the functional core of the 30S ribosomal subunit. Associates with free 30S ribosomal subunits (but not with 30S subunits that are part of 70S ribosomes or polysomes). Required for efficient processing of 16S rRNA. May interact with the 5'-terminal helix region of 16S rRNA. The polypeptide is Ribosome-binding factor A (Methylobacterium sp. (strain 4-46)).